The sequence spans 442 residues: Serine--tRNA ligase (442 aa).

Thr249–Glu251 serves as a coordination point for L-serine. Arg280–Glu282 lines the ATP pocket. An L-serine-binding site is contributed by Glu303. Glu367 to Ser370 lines the ATP pocket. Residue Ser402 coordinates L-serine.

The protein belongs to the class-II aminoacyl-tRNA synthetase family. Type-1 seryl-tRNA synthetase subfamily. As to quaternary structure, homodimer. The tRNA molecule binds across the dimer.

The protein localises to the cytoplasm. The catalysed reaction is tRNA(Ser) + L-serine + ATP = L-seryl-tRNA(Ser) + AMP + diphosphate + H(+). It catalyses the reaction tRNA(Sec) + L-serine + ATP = L-seryl-tRNA(Sec) + AMP + diphosphate + H(+). It participates in aminoacyl-tRNA biosynthesis; selenocysteinyl-tRNA(Sec) biosynthesis; L-seryl-tRNA(Sec) from L-serine and tRNA(Sec): step 1/1. Catalyzes the attachment of serine to tRNA(Ser). Is also able to aminoacylate tRNA(Sec) with serine, to form the misacylated tRNA L-seryl-tRNA(Sec), which will be further converted into selenocysteinyl-tRNA(Sec). In Acidovorax sp. (strain JS42), this protein is Serine--tRNA ligase.